A 175-amino-acid polypeptide reads, in one-letter code: Regenerating islet-derived protein 3-alpha (175 aa).

Positions 1–26 (MLPPMALPSVSWMLLSCLMLLSQVQG) are cleaved as a signal peptide. Positions 27–37 (EEPQRELPSAR) are excised as a propeptide. 3 cysteine pairs are disulfide-bonded: cysteine 40/cysteine 51, cysteine 68/cysteine 171, and cysteine 146/cysteine 163. Positions 47–172 (YGSHCYALFL…CNVRLPYVCK (126 aa)) constitute a C-type lectin domain. The Zn(2+) site is built by histidine 50 and histidine 107. The sufficient to activate EXTL3 stretch occupies residues 103 to 118 (WIGLHDPTQGTEPNGE). Residues 114-116 (EPN) carry the EPN motif. Residues glutamate 121 and histidine 145 each coordinate Zn(2+).

As to quaternary structure, forms a hexameric membrane-permeabilizing oligomeric pore on membrane phospholipids. The hexamer is formed by three dimers related by helical symmetry. Forms filaments, filamentation traps pore complexes and limits damage to host cells. Interacts with EXTL3. In terms of processing, proteolytic processing by trypsin removes an inhibitory N-terminal propeptide and is essential for peptidoglycan binding and antibacterial activity. Expressed by keratinocytes. Highly expressed in epidermal keratinocytes of psoriasis patients (at protein level). Constitutively expressed in intestine. Low expression is found in healthy pancreas. Overexpressed during the acute phase of pancreatitis and in some patients with chronic pancreatitis.

The protein resides in the secreted. Lipopolysaccharide inhibits pore-forming activity, explaining why is bactericidal for Gram-positive but not Gram-negative bacteria. Functionally, bactericidal C-type lectin which acts exclusively against Gram-positive bacteria and mediates bacterial killing by binding to surface-exposed carbohydrate moieties of peptidoglycan. Binds membrane phospholipids and kills bacteria by forming a hexameric membrane-permeabilizing oligomeric pore. Its function is as follows. Acts as a hormone in response to different stimuli like anti-inflammatory signals, such as IL17A, or gut microbiome. Secreted by different cell types to activate its receptor EXTL3 and induce cell specific signaling pathways. Induced by IL17A in keratinocytes, regulates keratinocyte proliferation and differentiation after skin injury via activation of EXTL3-PI3K-AKT signaling pathway. In parallel, inhibits skin inflammation through the inhibition of inflammatory cytokines such as IL6 and TNF. In pancreas, is able to permealize beta-cells membrane and stimulate their proliferation. Has bacteriostatic activity. This chain is Regenerating islet-derived protein 3-alpha, found in Homo sapiens (Human).